The chain runs to 270 residues: Carboxy-S-adenosyl-L-methionine synthase (270 aa).

S-adenosyl-L-methionine-binding positions include Tyr65, 90 to 92, 143 to 144, Asn158, and Arg225; these read GCS and DI.

It belongs to the class I-like SAM-binding methyltransferase superfamily. Cx-SAM synthase family. In terms of assembly, homodimer.

It catalyses the reaction prephenate + S-adenosyl-L-methionine = carboxy-S-adenosyl-L-methionine + 3-phenylpyruvate + H2O. Functionally, catalyzes the conversion of S-adenosyl-L-methionine (SAM) to carboxy-S-adenosyl-L-methionine (Cx-SAM). In Chromohalobacter salexigens (strain ATCC BAA-138 / DSM 3043 / CIP 106854 / NCIMB 13768 / 1H11), this protein is Carboxy-S-adenosyl-L-methionine synthase.